Consider the following 445-residue polypeptide: MTRNGLSHAQDDLWPAPFRHGSPVSGTVAVPGSKSLTNRYLVLAALASEPSLVRRPLHSRDSALMVAALQTLGAAVTPLPDPGPFGPDLRIDPVRRSAPAADPVRIDCGLAGTVMRFVPPLAALHTGQVDFDGDDAARVRPMGPVLDGLRQLGVHVVDQGRAALPFRVLGTGSVPGGTVTIDASGSSQFVSALLLAAVRFDSPLVLRHDAPGGVPSLPHVEMTLQVLRDAGVDARRVDERSWRVVPGDVAGLDVTVEPDLSNAGPFLAAAVATGGTVSIPDWPQHTTQGGDHWRHILPRFGADVTLREGVFTVTGPRELRGVDLDLSEAGELAPTVAALCALASGPSRLRGIAHLRGHETDRLAALSTELNGLGGAVTETLDGLAIEPTALHGGVFHTYQDHRMATAGAILGLRVPGVQVADIATTAKTLPEFPRMWAELVGSEG.

3-phosphoshikimate is bound by residues Lys34, Ser35, and Arg39. Residue Lys34 coordinates phosphoenolpyruvate. Gly112 and Arg140 together coordinate phosphoenolpyruvate. Positions 186, 187, 188, 216, 331, and 358 each coordinate 3-phosphoshikimate. Gln188 contributes to the phosphoenolpyruvate binding site. Glu331 functions as the Proton acceptor in the catalytic mechanism. 3 residues coordinate phosphoenolpyruvate: Arg362, Arg403, and Lys428.

Belongs to the EPSP synthase family. In terms of assembly, monomer.

The protein localises to the cytoplasm. It carries out the reaction 3-phosphoshikimate + phosphoenolpyruvate = 5-O-(1-carboxyvinyl)-3-phosphoshikimate + phosphate. It functions in the pathway metabolic intermediate biosynthesis; chorismate biosynthesis; chorismate from D-erythrose 4-phosphate and phosphoenolpyruvate: step 6/7. In terms of biological role, catalyzes the transfer of the enolpyruvyl moiety of phosphoenolpyruvate (PEP) to the 5-hydroxyl of shikimate-3-phosphate (S3P) to produce enolpyruvyl shikimate-3-phosphate and inorganic phosphate. In Kocuria rhizophila (strain ATCC 9341 / DSM 348 / NBRC 103217 / DC2201), this protein is 3-phosphoshikimate 1-carboxyvinyltransferase.